Reading from the N-terminus, the 92-residue chain is Ferredoxin-like protein in nif region (92 aa).

4Fe-4S ferredoxin-type domains follow at residues 2-28 and 29-65; these read ALKIVESCVNCWACVDVCPSEAISLAG and PHFEISASKCTECDGDYAEKQCASICPVEGAILLADG. Residues cysteine 9, cysteine 12, cysteine 15, cysteine 19, cysteine 38, cysteine 41, cysteine 50, and cysteine 54 each contribute to the [4Fe-4S] cluster site.

The cofactor is [4Fe-4S] cluster.

Its function is as follows. Ferredoxins are iron-sulfur proteins that transfer electrons in a wide variety of metabolic reactions. This chain is Ferredoxin-like protein in nif region, found in Azotobacter vinelandii.